Consider the following 222-residue polypeptide: Small ribosomal subunit protein uS3 (222 aa).

The KH type-2 domain maps to 38 to 106 (IRKFISEKLA…NVHINIVEIK (69 aa)).

The protein belongs to the universal ribosomal protein uS3 family. As to quaternary structure, part of the 30S ribosomal subunit. Forms a tight complex with proteins S10 and S14.

In terms of biological role, binds the lower part of the 30S subunit head. Binds mRNA in the 70S ribosome, positioning it for translation. This chain is Small ribosomal subunit protein uS3, found in Lactobacillus johnsonii (strain CNCM I-12250 / La1 / NCC 533).